Consider the following 423-residue polypeptide: Serine--tRNA ligase (423 aa).

230-232 (TSE) serves as a coordination point for L-serine. Residue 261-263 (RSE) participates in ATP binding. Residue E284 coordinates L-serine. 348-351 (EISS) contributes to the ATP binding site. Position 384 (S384) interacts with L-serine.

Belongs to the class-II aminoacyl-tRNA synthetase family. Type-1 seryl-tRNA synthetase subfamily. As to quaternary structure, homodimer. The tRNA molecule binds across the dimer.

The protein resides in the cytoplasm. It carries out the reaction tRNA(Ser) + L-serine + ATP = L-seryl-tRNA(Ser) + AMP + diphosphate + H(+). It catalyses the reaction tRNA(Sec) + L-serine + ATP = L-seryl-tRNA(Sec) + AMP + diphosphate + H(+). It participates in aminoacyl-tRNA biosynthesis; selenocysteinyl-tRNA(Sec) biosynthesis; L-seryl-tRNA(Sec) from L-serine and tRNA(Sec): step 1/1. Functionally, catalyzes the attachment of serine to tRNA(Ser). Is also able to aminoacylate tRNA(Sec) with serine, to form the misacylated tRNA L-seryl-tRNA(Sec), which will be further converted into selenocysteinyl-tRNA(Sec). This is Serine--tRNA ligase from Macrococcus caseolyticus (strain JCSC5402) (Macrococcoides caseolyticum).